The primary structure comprises 257 residues: NAD-capped RNA hydrolase NudC (257 aa).

Residues Lys-27 and Arg-71 each coordinate substrate. Cys-100 and Cys-103 together coordinate Zn(2+). Position 113 (Glu-113) interacts with substrate. Zn(2+)-binding residues include Cys-118 and Cys-121. Tyr-126 is a substrate binding site. A Nudix hydrolase domain is found at 127–251; the sequence is PQIAPCIIVG…IARRLIEDTI (125 aa). Residues Ala-160, Glu-176, and Glu-180 each coordinate a divalent metal cation. The Nudix box signature appears at 161–182; it reads GFVEVGETLEEAVVREVMEESN. 194–201 contacts substrate; it reads QPWPFPHS. Glu-221 is an a divalent metal cation binding site. Ala-243 lines the substrate pocket.

The protein belongs to the Nudix hydrolase family. NudC subfamily. In terms of assembly, homodimer. It depends on Mg(2+) as a cofactor. The cofactor is Mn(2+). Requires Zn(2+) as cofactor.

The catalysed reaction is a 5'-end NAD(+)-phospho-ribonucleoside in mRNA + H2O = a 5'-end phospho-adenosine-phospho-ribonucleoside in mRNA + beta-nicotinamide D-ribonucleotide + 2 H(+). It catalyses the reaction NAD(+) + H2O = beta-nicotinamide D-ribonucleotide + AMP + 2 H(+). It carries out the reaction NADH + H2O = reduced beta-nicotinamide D-ribonucleotide + AMP + 2 H(+). Functionally, mRNA decapping enzyme that specifically removes the nicotinamide adenine dinucleotide (NAD) cap from a subset of mRNAs by hydrolyzing the diphosphate linkage to produce nicotinamide mononucleotide (NMN) and 5' monophosphate mRNA. The NAD-cap is present at the 5'-end of some mRNAs and stabilizes RNA against 5'-processing. Has preference for mRNAs with a 5'-end purine. Catalyzes the hydrolysis of a broad range of dinucleotide pyrophosphates. This Photorhabdus laumondii subsp. laumondii (strain DSM 15139 / CIP 105565 / TT01) (Photorhabdus luminescens subsp. laumondii) protein is NAD-capped RNA hydrolase NudC.